The primary structure comprises 200 residues: MARVYVGNLDPRVTAREIEDEFRVFGVLRSVWVARKPPGFAFIDFDDRRDAEDAIRDLDGKNGWRVELSTKAGSGRGRDRSGGSDMKCYECGEPGHFARECRLRIGSGGLGSGRRRSRSRSRSPRYRGRSRSRSPRYRRSPSYGRSPRDRSPKRRSYSRSPPPARARSYSRSPPPPRERSYSRSPAQPANREESPYANNA.

The 70-residue stretch at 2-71 folds into the RRM domain; the sequence is ARVYVGNLDP…NGWRVELSTK (70 aa). A CCHC-type zinc finger spans residues 86 to 103; sequence MKCYECGEPGHFARECRL. The interval 105–200 is disordered; that stretch reads IGSGGLGSGR…REESPYANNA (96 aa). Over residues 113–139 the composition is skewed to basic residues; it reads GRRRSRSRSRSPRYRGRSRSRSPRYRR.

It belongs to the splicing factor SR family. In terms of processing, extensively phosphorylated on serine residues in the RS domain. As to expression, expressed in roots, leaves and immature seeds.

The protein resides in the nucleus. Its function is as follows. Involved in pre-mRNA splicing. In protoplast assay, enhances splicing efficiency of WAXY intron 1 and alters the selection of the 5'-splice sites by stimulating site 1 (proximal site). The sequence is that of Serine/arginine-rich splicing factor RSZ23 (RSZ23) from Oryza sativa subsp. japonica (Rice).